A 408-amino-acid chain; its full sequence is Lipoate--protein ligase 1 (408 aa).

The N-terminal 18 residues, 1–18 (MKRIFRLVRRCHYSTEKR), are a transit peptide targeting the mitochondrion. Residues 60–242 (KFNEPILFLW…EFTKFYEQNY (183 aa)) enclose the BPL/LPL catalytic domain. ATP contacts are provided by arginine 102, glycine 107, and tyrosine 110. A (R)-lipoate-binding site is contributed by glycine 107. Aspartate 153 serves as a coordination point for Mg(2+). Lysine 160 is an ATP binding site. A (R)-lipoate-binding site is contributed by lysine 160.

It belongs to the LplA family.

The protein localises to the mitochondrion. The enzyme catalyses L-lysyl-[lipoyl-carrier protein] + (R)-lipoate + ATP = N(6)-[(R)-lipoyl]-L-lysyl-[lipoyl-carrier protein] + AMP + diphosphate + H(+). It carries out the reaction (R)-dihydrolipoate + L-lysyl-[lipoyl-carrier protein] + ATP = N(6)-[(R)-dihydrolipoyl]-L-lysyl-[lipoyl-carrier protein] + AMP + diphosphate + H(+). The catalysed reaction is (R)-dihydrolipoate + ATP + H(+) = N(6)-[(R)-dihydrolipoyl]-5'-AMP + diphosphate. It catalyses the reaction N(6)-[(R)-dihydrolipoyl]-5'-AMP + L-lysyl-[lipoyl-carrier protein] = N(6)-[(R)-dihydrolipoyl]-L-lysyl-[lipoyl-carrier protein] + AMP + 2 H(+). The protein operates within protein modification; protein lipoylation via exogenous pathway; protein N(6)-(lipoyl)lysine from lipoate: step 1/2. Its pathway is protein modification; protein lipoylation via exogenous pathway; protein N(6)-(lipoyl)lysine from lipoate: step 2/2. Its activity is regulated as follows. Inhibited by the lipoate analog 8-bromo-octanoate (BrO). Catalytic activity is increased in the presence of Mg(2+). Catalyzes both the ATP-dependent activation of exogenously supplied lipoate to lipoyl-AMP and the transfer of the activated lipoyl onto the lipoyl domains of lipoate-dependent enzymes. In the mitochondrion, functions as a redox switch between two lipoylation routes. Senses the oxidation state of lipoate and determines which downstream enzymes will be lipoylated. In low reducing conditions, uses lipoate in its oxidized ring form to lipoylate glycine cleavage system H-protein GCVH. In high reducing conditions and together with LipL2, uses reduced lipoate (dihydrolipoate) to lipoylate the E2 component of the branched chain alpha-ketoacid dehydrogenase complex BCKDH-E2/BCDH and the E2 component of the alpha-ketoglutarate dehydrogenase complex KDH. LipL1 is responsible for catalysing the activation of lipoate, forming lipoyl-AMP while LipL2 is required but is not capable of catalyzing this reaction. The polypeptide is Lipoate--protein ligase 1 (Plasmodium falciparum (isolate 3D7)).